The chain runs to 237 residues: Phosphoribosylaminoimidazole-succinocarboxamide synthase (237 aa).

It belongs to the SAICAR synthetase family.

The catalysed reaction is 5-amino-1-(5-phospho-D-ribosyl)imidazole-4-carboxylate + L-aspartate + ATP = (2S)-2-[5-amino-1-(5-phospho-beta-D-ribosyl)imidazole-4-carboxamido]succinate + ADP + phosphate + 2 H(+). The protein operates within purine metabolism; IMP biosynthesis via de novo pathway; 5-amino-1-(5-phospho-D-ribosyl)imidazole-4-carboxamide from 5-amino-1-(5-phospho-D-ribosyl)imidazole-4-carboxylate: step 1/2. In Escherichia coli O7:K1 (strain IAI39 / ExPEC), this protein is Phosphoribosylaminoimidazole-succinocarboxamide synthase.